Consider the following 124-residue polypeptide: Small ribosomal subunit protein uS13 (124 aa).

Positions 91-124 (HRKGLPVNGQNTRNNARTRKGKPKAVTGKKQAGK) are disordered.

The protein belongs to the universal ribosomal protein uS13 family. As to quaternary structure, part of the 30S ribosomal subunit. Forms a loose heterodimer with protein S19. Forms two bridges to the 50S subunit in the 70S ribosome.

Located at the top of the head of the 30S subunit, it contacts several helices of the 16S rRNA. In the 70S ribosome it contacts the 23S rRNA (bridge B1a) and protein L5 of the 50S subunit (bridge B1b), connecting the 2 subunits; these bridges are implicated in subunit movement. Contacts the tRNAs in the A and P-sites. In Acholeplasma laidlawii (strain PG-8A), this protein is Small ribosomal subunit protein uS13.